Consider the following 481-residue polypeptide: RAC-alpha serine/threonine-protein kinase (481 aa).

In terms of domain architecture, PH spans 5-108; that stretch reads AIVKEGWLHK…WIQVIQHVAD (104 aa). The disordered stretch occupies residues 120-141; sequence VRSGDSPSDNSGAEEMEVSHSK. Residues serine 127 and serine 130 are each glycosylated (O-linked (GlcNAc) serine). Residues 151–409 enclose the Protein kinase domain; it reads FEYLKLLGKG…AKEIMQHKFF (259 aa). ATP is bound by residues 157 to 165 and lysine 180; that span reads LGKGTFGKV. The Proton acceptor role is filled by aspartate 275. Threonine 306 carries an O-linked (GlcNAc) threonine glycan. Position 309 is a phosphothreonine; by PDPK1 (threonine 309). O-linked (GlcNAc) threonine glycosylation occurs at threonine 313. The AGC-kinase C-terminal domain maps to 410–481; it reads AGIVWQDVYE…QFSYSASGNA (72 aa). Phosphoserine is present on serine 474. O-linked (GlcNAc) serine; alternate glycosylation is present at serine 474. Tyrosine 475 is subject to Phosphotyrosine.

It belongs to the protein kinase superfamily. AGC Ser/Thr protein kinase family. RAC subfamily. Cleavage by caspase-3/CASP3. Cleaved at the caspase-3 consensus site Asp-463 during apoptosis, resulting in down-regulation of the AKT signaling pathway and decreased cell survival. Post-translationally, phosphorylation on Thr-309 and Ser-474 is required for full activity. Phosphorylation of the activation loop at Thr-309 by PDPK1/PDK1 is a prerequisite for full activation. Phosphorylation by mTORC2 at Ser-474 in response to growth factors plays a key role in AKT1 activation by facilitating subsequent phosphorylation of the activation loop by PDPK1/PDK1. Expressed in the oocyte.

It localises to the cytoplasm. Its subcellular location is the nucleus. The enzyme catalyses L-seryl-[protein] + ATP = O-phospho-L-seryl-[protein] + ADP + H(+). It carries out the reaction L-threonyl-[protein] + ATP = O-phospho-L-threonyl-[protein] + ADP + H(+). Activated in response to insulin. Three specific sites, one in the kinase domain (Thr-309) and the two other ones in the C-terminal regulatory region (Ser-474 and Tyr-475), need to be phosphorylated for its full activation. Functionally, AKT1 is one of several closely related serine/threonine-protein kinases known as the AKT kinase, and which regulate many processes including metabolism, proliferation, cell survival, growth and angiogenesis. This is mediated through serine and/or threonine phosphorylation of a range of downstream substrates. Over 100 substrate candidates have been reported so far, but for most of them, no isoform specificity has been reported. Signals downstream of phosphatidylinositol 3-kinase (PI(3)K) to mediate the effects of various growth factors such as platelet-derived growth factor (PDGF), epidermal growth factor (EGF), insulin and insulin-like growth factor 1 (IGF1). Plays a role as a key modulator of the AKT-mTOR signaling pathway controlling the tempo of the process of newborn neurons integration during adult neurogenesis, including correct neuron positioning, dendritic development and synapse formation. Plays a role in glucose transport by mediating insulin-induced translocation of the GLUT4 glucose transporter to the cell surface. Mediates the antiapoptotic effects of IGF1. Mediates insulin-stimulated protein synthesis, partly by playing a role in both insulin-induced phosphorylation of 4E-BP1 and in insulin-induced activation of p70 S6 kinase. Promotes glycogen synthesis by mediating the insulin-induced activation of glycogen synthase. Required for insulin-stimulated meiotic reinitiation during oocyte maturation. May be involved in the regulation of vesicular functions such as preciliary trafficking and endocytic recycling. The polypeptide is RAC-alpha serine/threonine-protein kinase (Xenopus laevis (African clawed frog)).